The sequence spans 372 residues: GTPase Obg (372 aa).

Residues 1 to 159 (MKFIDEARIE…RMLKLELKVL (159 aa)) form the Obg domain. Residues 128 to 147 (LHFKSSTNRAPRQKTDGKPG) are disordered. One can recognise an OBG-type G domain in the interval 160 to 334 (ADVGLLGMPN…LVYAIHDYLV (175 aa)). Residues 166-173 (GMPNAGKS), 191-195 (FTTLA), 213-216 (DIPG), 284-287 (NKLD), and 315-317 (SAL) contribute to the GTP site. 2 residues coordinate Mg(2+): Ser173 and Thr193.

Belongs to the TRAFAC class OBG-HflX-like GTPase superfamily. OBG GTPase family. Monomer. Requires Mg(2+) as cofactor.

The protein resides in the cytoplasm. Functionally, an essential GTPase which binds GTP, GDP and possibly (p)ppGpp with moderate affinity, with high nucleotide exchange rates and a fairly low GTP hydrolysis rate. Plays a role in control of the cell cycle, stress response, ribosome biogenesis and in those bacteria that undergo differentiation, in morphogenesis control. This chain is GTPase Obg, found in Burkholderia pseudomallei (strain 668).